The primary structure comprises 797 residues: Peroxisome proliferator-activated receptor gamma coactivator 1-alpha (797 aa).

Lysine 77 carries the post-translational modification N6-acetyllysine. A disordered region spans residues glutamate 101–glutamate 138. Polar residues predominate over residues alanine 114–proline 127. The LXXLL motif motif lies at leucine 142 to leucine 146. The residue at position 144 (lysine 144) is an N6-acetyllysine. The residue at position 177 (threonine 177) is a Phosphothreonine; by AMPK. Lysine 183 carries the post-translational modification N6-acetyllysine. A disordered region spans residues tyrosine 212 to asparagine 276. Residues aspartate 218–alanine 236 show a composition bias toward basic and acidic residues. Positions threonine 243 to leucine 259 are enriched in polar residues. N6-acetyllysine occurs at positions 253, 270, 277, 320, 346, 412, 441, and 450. The disordered stretch occupies residues glycine 289 to serine 376. The interaction with PPARG stretch occupies residues glycine 292–threonine 338. The tract at residues glutamate 349–arginine 797 is mediates interaction with RNF34. Serine 538 is modified (phosphoserine; by AMPK). Disordered stretches follow at residues asparagine 543–serine 598, histidine 612–aspartate 634, and glutamate 648–lysine 668. The span at glutamine 562–cysteine 577 shows a compositional bias: basic residues. Over residues serine 578–serine 598 the composition is skewed to low complexity. Positions serine 621–arginine 630 are enriched in basic residues. The RRM domain occupies arginine 676–arginine 752. N6-acetyllysine is present on residues lysine 757 and lysine 778.

In terms of assembly, homooligomer. Interacts with MYBBP1A; inhibits MYBBP1A transcriptional activation. Interacts with PRDM16, LPIN1 and PML. Interacts (via LXXLL motif) with RORA and RORC (via AF-2 motif); activates RORA and RORC transcriptional activation. Interacts with LRPPRC. Interacts with FOXO1. Interacts with NR5A2. Phosphorylation by AMPK in skeletal muscle increases activation of its own promoter. Phosphorylated by CLK2. In terms of processing, heavily acetylated by KAT2A/GCN5 under conditions of high nutrients, leading to inactivation of PPARGC1A. Deacetylated by SIRT1 in low nutrients/high NAD conditions, leading to its activation. Post-translationally, ubiquitinated. Ubiquitination by RNF34 induces proteasomal degradation. White quadriceps and red tibialis anterior (TA) muscles, liver, kidney and brown adipose tissue (at protein level). Skeletal muscle, brown adipose tissue, heart, kidney and brain.

Its subcellular location is the nucleus. The protein resides in the PML body. Functionally, transcriptional coactivator for steroid receptors and nuclear receptors. Greatly increases the transcriptional activity of PPARG and thyroid hormone receptor on the uncoupling protein promoter. Can regulate key mitochondrial genes that contribute to the program of adaptive thermogenesis. Plays an essential role in metabolic reprogramming in response to dietary availability through coordination of the expression of a wide array of genes involved in glucose and fatty acid metabolism. Acts as a key regulator of gluconeogenesis: stimulates hepatic gluconeogenesis by increasing the expression of gluconeogenic enzymes, and acting together with FOXO1 to promote the fasting gluconeogenic program. Induces the expression of PERM1 in the skeletal muscle in an ESRRA-dependent manner. Also involved in the integration of the circadian rhythms and energy metabolism. Required for oscillatory expression of clock genes, such as BMAL1 and NR1D1, through the coactivation of RORA and RORC, and metabolic genes, such as PDK4 and PEPCK. This chain is Peroxisome proliferator-activated receptor gamma coactivator 1-alpha (Ppargc1a), found in Mus musculus (Mouse).